The chain runs to 81 residues: uncharacterized protein (81 aa).

Residues 46-81 (ASSPVVKRKSLVKRKSPVKRSPLKKRSQMRTSPCEA) are disordered. Residues 51-73 (VKRKSLVKRKSPVKRSPLKKRSQ) show a composition bias toward basic residues.

This is an uncharacterized protein from Frog virus 3 (isolate Goorha) (FV-3).